The sequence spans 666 residues: Hybrid PKS-NRPS synthetase pytA (666 aa).

The region spanning 1 to 340 is the Ketosynthase family 3 (KS3) domain; sequence MDPQQRLLLE…GTNAHAILEE (340 aa). Catalysis depends on for beta-ketoacyl synthase activity residues cysteine 87, histidine 222, and histidine 260. The segment at 455–665 is malonyl-CoA:ACP transacylase (MAT) domain; that stretch reads VFTGQGAQWF…VFVHSLVIKR (211 aa). Residue serine 548 is the For malonyltransferase activity of the active site.

In the C-terminal section; belongs to the NRP synthetase family.

It functions in the pathway secondary metabolite biosynthesis. Functionally, hybrid PKS-NRPS synthetase; part of the gene cluster that mediates the biosynthesis of pyranterreones, a family of antioxidative compounds. The first step of pyranonigrins biosynthesis is performed by the hybrid PKS-NRPS synthetase pytA that condenses 4 malonyl-CoA units ato the acetyl starter unit by the modular PKS of pytA. The acyl chain is then connected to an L-serine through the amide bond by the modular NRPS of pytA. A tetramic acid is formed and released from the PKS-NRPS pytA to give pyranterreone 5 with the help of the thioesterase pytI. Pyranterreone 5 could be methylated by pytC to afford pyranterreone 6. Both pyranterreones 5 and 6 are subsequently oxidized by the FAD-linked oxidoreductase pytB and the cytochrome P450 monooxygenase pytD to form the fused gamma-pyrone core, resulting in pyranterreones 7 and 11, respectively. The hydroxy group at C-8 of pyranterreones 7 and 11 are dehydrated by the aspartyl protease pytH to form a delta-7 double bond to give pyranterreones 3 and 1, 2 accordingly. The exo-methylene of pyranterreone 3 could be reduced into a pendant methyl by reductase pytE to provide pyranterreone 4, also known as cordylactam. Pyranterreone 4 can be reconverted to pyranterreone 3 through pytB-catalyzed dehydrogenation or further oxidized to pyranterreones 9 and 10. This Aspergillus terreus (strain NIH 2624 / FGSC A1156) protein is Hybrid PKS-NRPS synthetase pytA.